A 106-amino-acid polypeptide reads, in one-letter code: MRSMIDNLTVQSEHLNSLASQHENEAACASSGVSAAAGLANAVSTSHGSYCAQFNDTLKMYEDAHRTLGESLHTGGIDLARVLRVAAAMYCDADEICGSDIKSAFG.

It belongs to the EspC family.

This is EspC protein homolog from Mycobacterium leprae (strain TN).